The sequence spans 417 residues: MFANISIAEFDPELAQAITNEDARQEAHIELIASENYCSPAVMEAQGSKLTNKYAEGYPGKRYYGGCEYVDIIEQLAIDRAKELFGADYANVQPHAGSQANSAVYLALLNPGDTVLGMSLAHGGHLTHGAKVSFSGKTYNAIQYGLNPETGEIDYEEVERLALEHKPRMIVAGFSAYSQIVDWQRFRDIADKIGAYLFVDMAHVAGLVAAGVYPNPVQIADVTTTTTHKTLRGPRSGLILAKANEEIEKKLQSAVFPGNQGGPLVHAVAAKAICFKEAMAPEYKAYQQQVVKNAQAMAEVLIERGYDVVSGGTKNHLFLLSLIKQDITGKDADAWLGAAHITVNKNSVPNDPRSPFVTSGIRIGTPAVTTRGFGEAEVRDLASWIADILDSKGDEAVINTVKAKVEAVCAKFPVYAK.

(6S)-5,6,7,8-tetrahydrofolate is bound by residues leucine 120 and 124–126 (GHL). N6-(pyridoxal phosphate)lysine is present on lysine 229. 354 to 356 (SPF) contacts (6S)-5,6,7,8-tetrahydrofolate.

Belongs to the SHMT family. As to quaternary structure, homodimer. Pyridoxal 5'-phosphate is required as a cofactor.

Its subcellular location is the cytoplasm. The catalysed reaction is (6R)-5,10-methylene-5,6,7,8-tetrahydrofolate + glycine + H2O = (6S)-5,6,7,8-tetrahydrofolate + L-serine. The protein operates within one-carbon metabolism; tetrahydrofolate interconversion. Its pathway is amino-acid biosynthesis; glycine biosynthesis; glycine from L-serine: step 1/1. Catalyzes the reversible interconversion of serine and glycine with tetrahydrofolate (THF) serving as the one-carbon carrier. This reaction serves as the major source of one-carbon groups required for the biosynthesis of purines, thymidylate, methionine, and other important biomolecules. Also exhibits THF-independent aldolase activity toward beta-hydroxyamino acids, producing glycine and aldehydes, via a retro-aldol mechanism. The chain is Serine hydroxymethyltransferase from Acinetobacter radioresistens.